The primary structure comprises 424 residues: MKFASKKNNQKNSSKNDERYRELDNLVQEGNGSRLGGGSCLGKCAHVFKLIFKEIKDNIFIYILSIIYLSVCVMNKIFAKRTLNKIGNYSFVTSETHNFICMIMFFIVYSLFGNKKGNSKERHRSFNLQFFAISMLDACSVILAFIGLTRTTGNIQSFVLQLSIPINMFFCFLILRYRYHLYNYLGAVIIVVTIALVEMKLSFETQEENSIIFNLVLISALIPVCFSNMTREIVFKKYKIDILRLNAMVSFFQLFTSCLILPVYTLPFLKQLHLPYNEIWTNIKNGFACLFLGRNTVVENCGLGMAKLCDDCDGAWKTFALFSFFNICDNLITSYIIDKFSTMTYTIVSCIQGPAIAIAYYFKFLAGDVVREPRLLDFVTLFGYLFGSIIYRVGNIILERKKMRNEENEDSEGELTNVDSIITQ.

The Cytoplasmic segment spans residues 1–58 (MKFASKKNNQKNSSKNDERYRELDNLVQEGNGSRLGGGSCLGKCAHVFKLIFKEIKDN). Residues 59–79 (IFIYILSIIYLSVCVMNKIFA) form a helical membrane-spanning segment. The Vacuolar segment spans residues 80–90 (KRTLNKIGNYS). The N-linked (GlcNAc...) asparagine glycan is linked to N88. The chain crosses the membrane as a helical span at residues 91–111 (FVTSETHNFICMIMFFIVYSL). Over 112-127 (FGNKKGNSKERHRSFN) the chain is Cytoplasmic. A helical membrane pass occupies residues 128–148 (LQFFAISMLDACSVILAFIGL). The Vacuolar portion of the chain corresponds to 149 to 154 (TRTTGN). Residues 155 to 175 (IQSFVLQLSIPINMFFCFLIL) form a helical membrane-spanning segment. Topologically, residues 176–178 (RYR) are cytoplasmic. Residues 179–199 (YHLYNYLGAVIIVVTIALVEM) form a helical membrane-spanning segment. Residues 200–209 (KLSFETQEEN) are Vacuolar-facing. Residues 210-230 (SIIFNLVLISALIPVCFSNMT) form a helical membrane-spanning segment. Residues 231–248 (REIVFKKYKIDILRLNAM) are Cytoplasmic-facing. A helical transmembrane segment spans residues 249–269 (VSFFQLFTSCLILPVYTLPFL). At 270-317 (KQLHLPYNEIWTNIKNGFACLFLGRNTVVENCGLGMAKLCDDCDGAWK) the chain is on the vacuolar side. 2 cysteine pairs are disulfide-bonded: C289/C312 and C301/C309. A helical membrane pass occupies residues 318-338 (TFALFSFFNICDNLITSYIID). The Cytoplasmic portion of the chain corresponds to 339–346 (KFSTMTYT). Residues 347-367 (IVSCIQGPAIAIAYYFKFLAG) form a helical membrane-spanning segment. The Vacuolar segment spans residues 368–377 (DVVREPRLLD). A helical membrane pass occupies residues 378-398 (FVTLFGYLFGSIIYRVGNIIL). At 399 to 424 (ERKKMRNEENEDSEGELTNVDSIITQ) the chain is on the cytoplasmic side.

Belongs to the CRT-like transporter family. As to quaternary structure, monomer.

It is found in the vacuole membrane. It carries out the reaction L-arginine(in) = L-arginine(out). The enzyme catalyses L-lysine(in) = L-lysine(out). The catalysed reaction is L-histidine(out) = L-histidine(in). It catalyses the reaction histamine(out) = histamine(in). It carries out the reaction spermidine(in) = spermidine(out). The enzyme catalyses Fe(3+)(in) = Fe(3+)(out). The catalysed reaction is Fe(2+)(in) = Fe(2+)(out). With respect to regulation, transporter activity is trans-stimulated by host-derived peptides containing 4-11 amino acids. Trans-stimulation by hemoglobin-derived peptide VDPVNF is pH-dependent and sodium-independent. Saquinavir trans-stimulates transport of hemoglobin-derived peptide VDPVNF. Protons are non-competitive inhibitors of chloroquine transport. Functionally, nutrient transporter. Substrate transport is pH-dependent. Can transport arginine, lysine, histidine, peptides, histamine and spermidine. May modulate activity of endogenous transporters. Involved in maintaining the osmotic homeostasis of the digestive vacuole. Required for the asexual intraerythrocytic proliferation of parasites. Can transport Fe(2+) and Fe(3+). In Plasmodium falciparum, this protein is Chloroquine resistance transporter.